The primary structure comprises 547 residues: Sesquiterpene synthase TPS3 (547 aa).

(2E,6E)-farnesyl diphosphate is bound by residues R265, D302, D306, R443, and D446. Mg(2+)-binding residues include D302 and D306. Residues 302–306 carry the DDXXD motif motif; sequence DDIYD. 3 residues coordinate Mg(2+): D446, T450, and E454.

It belongs to the terpene synthase family. Tpsb subfamily. As to quaternary structure, monomer. The cofactor is Mg(2+).

The protein resides in the cytoplasm. The catalysed reaction is (2E,6E)-farnesyl diphosphate = (1S,5S,6R)-alpha-bergamotene + diphosphate. It functions in the pathway secondary metabolite biosynthesis; terpenoid biosynthesis. Functionally, sesquiterpene synthase involved in the biosynthesis of volatile organic compounds. Mediates the conversion of (2E,6E)-farnesyl diphosphate (FPP) into alpha-bergamotene. Does not use (2E)-geranyl diphosphate (GPP) as substrate. The chain is Sesquiterpene synthase TPS3 from Cananga odorata (Ylang-ylang tree).